The primary structure comprises 450 residues: tRNA-2-methylthio-N(6)-dimethylallyladenosine synthase (450 aa).

In terms of domain architecture, MTTase N-terminal spans 2–119; sequence KKVFVKTYGC…LPDLIARRQR (118 aa). Residues C11, C48, C82, C156, C160, and C163 each coordinate [4Fe-4S] cluster. Residues 142–375 enclose the Radical SAM core domain; the sequence is RVEGPSAFVS…QATIEENVQR (234 aa). Residues 378-448 form the TRAM domain; the sequence is QNMVGTVQRI…PHSLRGEIVV (71 aa).

It belongs to the methylthiotransferase family. MiaB subfamily. In terms of assembly, monomer. The cofactor is [4Fe-4S] cluster.

The protein resides in the cytoplasm. It carries out the reaction N(6)-dimethylallyladenosine(37) in tRNA + (sulfur carrier)-SH + AH2 + 2 S-adenosyl-L-methionine = 2-methylsulfanyl-N(6)-dimethylallyladenosine(37) in tRNA + (sulfur carrier)-H + 5'-deoxyadenosine + L-methionine + A + S-adenosyl-L-homocysteine + 2 H(+). In terms of biological role, catalyzes the methylthiolation of N6-(dimethylallyl)adenosine (i(6)A), leading to the formation of 2-methylthio-N6-(dimethylallyl)adenosine (ms(2)i(6)A) at position 37 in tRNAs that read codons beginning with uridine. The polypeptide is tRNA-2-methylthio-N(6)-dimethylallyladenosine synthase (Cupriavidus necator (strain ATCC 17699 / DSM 428 / KCTC 22496 / NCIMB 10442 / H16 / Stanier 337) (Ralstonia eutropha)).